A 368-amino-acid polypeptide reads, in one-letter code: Methionine import ATP-binding protein MetN (368 aa).

The region spanning 5–260 (IELNNLSVQF…PKEALTKQFI (256 aa)) is the ABC transporter domain. ATP is bound at residue 41-48 (GYSGAGKS).

Belongs to the ABC transporter superfamily. Methionine importer (TC 3.A.1.24) family. In terms of assembly, the complex is composed of two ATP-binding proteins (MetN), two transmembrane proteins (MetI) and a solute-binding protein (MetQ).

The protein localises to the cell membrane. It catalyses the reaction L-methionine(out) + ATP + H2O = L-methionine(in) + ADP + phosphate + H(+). The catalysed reaction is D-methionine(out) + ATP + H2O = D-methionine(in) + ADP + phosphate + H(+). Part of the ABC transporter complex MetNIQ involved in methionine import. Responsible for energy coupling to the transport system. The protein is Methionine import ATP-binding protein MetN of Lactococcus lactis subsp. cremoris (strain MG1363).